Consider the following 102-residue polypeptide: ATP-dependent Clp protease adapter protein ClpS (102 aa).

It belongs to the ClpS family. In terms of assembly, binds to the N-terminal domain of the chaperone ClpA.

Its function is as follows. Involved in the modulation of the specificity of the ClpAP-mediated ATP-dependent protein degradation. In Aromatoleum aromaticum (strain DSM 19018 / LMG 30748 / EbN1) (Azoarcus sp. (strain EbN1)), this protein is ATP-dependent Clp protease adapter protein ClpS.